The following is a 132-amino-acid chain: Small ribosomal subunit protein uS8 (132 aa).

Belongs to the universal ribosomal protein uS8 family. Part of the 30S ribosomal subunit. Contacts proteins S5 and S12.

In terms of biological role, one of the primary rRNA binding proteins, it binds directly to 16S rRNA central domain where it helps coordinate assembly of the platform of the 30S subunit. This Ligilactobacillus salivarius (strain UCC118) (Lactobacillus salivarius) protein is Small ribosomal subunit protein uS8.